The chain runs to 574 residues: Peptidyl-prolyl cis-trans isomerase FKBP9 (574 aa).

Positions M1–A26 are cleaved as a signal peptide. PPIase FKBP-type domains follow at residues G58–W146, S170–H258, G282–H369, and G393–V481. N-linked (GlcNAc...) asparagine glycosylation is found at N178, N290, N306, and N401. EF-hand domains lie at W492–S527 and D537–D572. 10 residues coordinate Ca(2+): D505, D507, D509, E511, E516, D550, N552, D554, K556, and E561. Residues H571–L574 carry the Prevents secretion from ER motif.

Post-translationally, phosphorylated.

It localises to the endoplasmic reticulum. It catalyses the reaction [protein]-peptidylproline (omega=180) = [protein]-peptidylproline (omega=0). Inhibited by FK506. PPIases accelerate the folding of proteins during protein synthesis. This chain is Peptidyl-prolyl cis-trans isomerase FKBP9 (FKBP9), found in Bos taurus (Bovine).